The sequence spans 138 residues: uncharacterized protein (138 aa).

The 70-residue stretch at 3–72 folds into the HTH merR-type domain; it reads LYSISKAAEK…LEDINEFVKD (70 aa). A DNA-binding region (H-T-H motif) is located at residues 6–25; the sequence is ISKAAEKTSISSYTLRYYEK.

This is an uncharacterized protein from Bacillus subtilis (strain 168).